Reading from the N-terminus, the 176-residue chain is Small ribosomal subunit protein uS8c (176 aa).

It belongs to the universal ribosomal protein uS8 family. As to quaternary structure, part of the 30S ribosomal subunit.

The protein localises to the plastid. The protein resides in the chloroplast. Its function is as follows. One of the primary rRNA binding proteins, it binds directly to 16S rRNA central domain where it helps coordinate assembly of the platform of the 30S subunit. The sequence is that of Small ribosomal subunit protein uS8c (rps8) from Stigeoclonium helveticum (Green alga).